The chain runs to 157 residues: Transcriptional regulator MraZ (157 aa).

2 consecutive SpoVT-AbrB domains span residues 7–54 (TYTM…GTSL) and 83–126 (TEML…EPER).

It belongs to the MraZ family. As to quaternary structure, forms oligomers.

The protein localises to the cytoplasm. The protein resides in the nucleoid. This chain is Transcriptional regulator MraZ, found in Azorhizobium caulinodans (strain ATCC 43989 / DSM 5975 / JCM 20966 / LMG 6465 / NBRC 14845 / NCIMB 13405 / ORS 571).